Here is a 729-residue protein sequence, read N- to C-terminus: Probable pre-mRNA-splicing factor ATP-dependent RNA helicase DEAH3 (729 aa).

The Helicase ATP-binding domain maps to 75 to 244; the sequence is LNTLNSNQTL…FSGAPLMKVP (170 aa). Position 88 to 95 (88 to 95) interacts with ATP; that stretch reads GETGSGKT. The DEAH box motif lies at 191-194; the sequence is DEAH. The Helicase C-terminal domain occupies 269-449; sequence TVVQIHMCEP…NTVLTLKKLG (181 aa).

Belongs to the DEAD box helicase family. DEAH subfamily. PRP43 sub-subfamily.

It catalyses the reaction ATP + H2O = ADP + phosphate + H(+). Functionally, may be involved in pre-mRNA splicing. The protein is Probable pre-mRNA-splicing factor ATP-dependent RNA helicase DEAH3 of Arabidopsis thaliana (Mouse-ear cress).